Reading from the N-terminus, the 533-residue chain is Decreased expression in renal and prostate cancer protein (533 aa).

Residues 1 to 12 (MKEPRIFPRERP) show a composition bias toward basic and acidic residues. 4 disordered regions span residues 1-31 (MKEP…GGPV), 67-164 (QNPS…PDPR), 177-259 (MRAG…RAGG), and 299-350 (ASGN…PNSA). Phosphoserine is present on S160. Residues 299–309 (ASGNMGTNPPT) show a composition bias toward polar residues. Residue R368 is modified to Asymmetric dimethylarginine. Omega-N-methylarginine is present on R396. A Phosphoserine modification is found at S432.

It belongs to the DERPC family.

The protein localises to the nucleus. Its function is as follows. Potential tumor suppressor. The chain is Decreased expression in renal and prostate cancer protein from Mus musculus (Mouse).